The primary structure comprises 100 residues: Large ribosomal subunit protein uL23 (100 aa).

Belongs to the universal ribosomal protein uL23 family. Part of the 50S ribosomal subunit. Contacts protein L29, and trigger factor when it is bound to the ribosome.

One of the early assembly proteins it binds 23S rRNA. One of the proteins that surrounds the polypeptide exit tunnel on the outside of the ribosome. Forms the main docking site for trigger factor binding to the ribosome. This is Large ribosomal subunit protein uL23 from Xylella fastidiosa (strain M23).